Consider the following 268-residue polypeptide: Nuclear protein UL4 homolog (268 aa).

It belongs to the alphaherpesvirinae HHV-1 UL4 family.

The protein localises to the host nucleus. The protein is Nuclear protein UL4 homolog (MDV016) of Gallid herpesvirus 2 (strain Chicken/Md5/ATCC VR-987) (GaHV-2).